Reading from the N-terminus, the 136-residue chain is ATP synthase epsilon chain (136 aa).

It belongs to the ATPase epsilon chain family. As to quaternary structure, F-type ATPases have 2 components, CF(1) - the catalytic core - and CF(0) - the membrane proton channel. CF(1) has five subunits: alpha(3), beta(3), gamma(1), delta(1), epsilon(1). CF(0) has three main subunits: a, b and c.

Its subcellular location is the cell inner membrane. Produces ATP from ADP in the presence of a proton gradient across the membrane. This Agrobacterium fabrum (strain C58 / ATCC 33970) (Agrobacterium tumefaciens (strain C58)) protein is ATP synthase epsilon chain.